Consider the following 389-residue polypeptide: (+)-bicyclogermacrene synthase TS4 (389 aa).

Residues Asp-136, Glu-140, His-284, Gly-288, and Asp-292 each coordinate Mg(2+). The short motif at 136–140 (DEVCE) is the DDxx(x)D/E motif element. The NDxxSxxxD/E motif signature appears at 284-292 (HDFIGLQKD).

This sequence belongs to the terpene synthase family.

It catalyses the reaction (2E,6E)-farnesyl diphosphate = bicyclogermacrene + diphosphate. In terms of biological role, catalyzes the cyclization of trans,trans-farnesyl diphosphate (FPP) to the bicyclic sesquiterpene bicyclogermacrene. In Penicillium expansum (Blue mold rot fungus), this protein is (+)-bicyclogermacrene synthase TS4.